Consider the following 170-residue polypeptide: Crossover junction endodeoxyribonuclease RuvC (170 aa).

Active-site residues include aspartate 8, glutamate 67, and aspartate 139. 3 residues coordinate Mg(2+): aspartate 8, glutamate 67, and aspartate 139.

Belongs to the RuvC family. Homodimer which binds Holliday junction (HJ) DNA. The HJ becomes 2-fold symmetrical on binding to RuvC with unstacked arms; it has a different conformation from HJ DNA in complex with RuvA. In the full resolvosome a probable DNA-RuvA(4)-RuvB(12)-RuvC(2) complex forms which resolves the HJ. It depends on Mg(2+) as a cofactor.

It is found in the cytoplasm. It carries out the reaction Endonucleolytic cleavage at a junction such as a reciprocal single-stranded crossover between two homologous DNA duplexes (Holliday junction).. Its function is as follows. The RuvA-RuvB-RuvC complex processes Holliday junction (HJ) DNA during genetic recombination and DNA repair. Endonuclease that resolves HJ intermediates. Cleaves cruciform DNA by making single-stranded nicks across the HJ at symmetrical positions within the homologous arms, yielding a 5'-phosphate and a 3'-hydroxyl group; requires a central core of homology in the junction. The consensus cleavage sequence is 5'-(A/T)TT(C/G)-3'. Cleavage occurs on the 3'-side of the TT dinucleotide at the point of strand exchange. HJ branch migration catalyzed by RuvA-RuvB allows RuvC to scan DNA until it finds its consensus sequence, where it cleaves and resolves the cruciform DNA. The chain is Crossover junction endodeoxyribonuclease RuvC from Pectobacterium atrosepticum (strain SCRI 1043 / ATCC BAA-672) (Erwinia carotovora subsp. atroseptica).